The sequence spans 137 residues: 2-iminobutanoate/2-iminopropanoate deaminase (137 aa).

Ser2 is modified (N-acetylserine). N6-succinyllysine occurs at positions 13, 60, and 67. Position 74 is a phosphothreonine (Thr74). Ser136 is subject to Phosphoserine.

This sequence belongs to the RutC family. In terms of assembly, homotrimer. Interacts with YTHDF2. Expressed predominantly in liver and kidney. Lower levels in lung and brain.

It is found in the cytoplasm. Its subcellular location is the nucleus. The protein localises to the peroxisome. It localises to the mitochondrion. It catalyses the reaction 2-iminobutanoate + H2O = 2-oxobutanoate + NH4(+). The catalysed reaction is 2-iminopropanoate + H2O = pyruvate + NH4(+). Functionally, catalyzes the hydrolytic deamination of enamine/imine intermediates that form during the course of normal metabolism. May facilitate the release of ammonia from these potentially toxic reactive metabolites, reducing their impact on cellular components. It may act on enamine/imine intermediates formed by several types of pyridoxal-5'-phosphate-dependent dehydratases including L-threonine dehydratase. Also promotes endoribonucleolytic cleavage of some transcripts by promoting recruitment of the ribonuclease P/MRP complex. Acts by bridging YTHDF2 and the ribonuclease P/MRP complex. RIDA/HRSP12 binds to N6-methyladenosine (m6A)-containing mRNAs containing a 5'-GGUUC-3' motif: cooperative binding of RIDA/HRSP12 and YTHDF2 to such transcripts lead to recruitment of the ribonuclease P/MRP complex and subsequent endoribonucleolytic cleavage. The chain is 2-iminobutanoate/2-iminopropanoate deaminase from Homo sapiens (Human).